The sequence spans 279 residues: Pleckstrin homology domain-containing family F member 1 (279 aa).

The region spanning 35–131 (VLLGEGVLTK…WISHIEECVR (97 aa)) is the PH domain. The FYVE-type zinc finger occupies 152–212 (DKATDICMRC…VCSLCYRELA (61 aa)). C158, C161, C175, C178, C183, C186, C204, and C207 together coordinate Zn(2+). The segment at 218–264 (EEAEEQGAGSPGQPAHLARPICGASSGDDDDSDEDKEGSRDGDWPSS) is disordered. A compositionally biased stretch (acidic residues) spans 244–253 (GDDDDSDEDK).

In terms of tissue distribution, highly expressed in heart and skeletal muscle. Weakly expressed in brain, thymus, spleen, kidney, liver, small intestine, placenta and lung.

It localises to the nucleus. It is found in the cytoplasm. Its subcellular location is the perinuclear region. The protein localises to the lysosome. Functionally, may induce apoptosis through the lysosomal-mitochondrial pathway. Translocates to the lysosome initiating the permeabilization of lysosomal membrane (LMP) and resulting in the release of CTSD and CTSL to the cytoplasm. Triggers the caspase-independent apoptosis by altering mitochondrial membrane permeabilization (MMP) resulting in the release of PDCD8. This is Pleckstrin homology domain-containing family F member 1 (PLEKHF1) from Homo sapiens (Human).